Here is a 192-residue protein sequence, read N- to C-terminus: uncharacterized protein (192 aa).

One can recognise a Nudix hydrolase domain in the interval 29-160 (HRQAAVLIPI…PLDIYRRGDS (132 aa)). Residues 67–89 (GAVDDTDASVIAAALREAEEEVA) carry the Nudix box motif. Mg(2+) contacts are provided by Glu83 and Glu87.

This sequence belongs to the Nudix hydrolase family. PCD1 subfamily. The cofactor is Mn(2+). It depends on Mg(2+) as a cofactor.

Functionally, probably mediates the hydrolysis of some nucleoside diphosphate derivatives. This is an uncharacterized protein from Shigella sonnei (strain Ss046).